Reading from the N-terminus, the 401-residue chain is Voltage-gated potassium channel subunit beta-1 (401 aa).

NADP(+)-binding residues include Thr-90, Trp-91, Gln-97, and Asp-119. Tyr-124 (proton donor/acceptor) is an active-site residue. Residues Asn-192, Ser-222, Arg-223, Gln-248, Trp-277, Ser-278, Pro-279, Leu-280, Ala-281, Cys-282, Lys-288, Arg-298, Gly-357, Ser-359, Gln-363, Glu-366, and Asn-367 each contribute to the NADP(+) site.

The protein belongs to the shaker potassium channel beta subunit family. As to quaternary structure, homotetramer. Interaction with tetrameric potassium channel alpha subunits gives rise to a heterooctamer.

Its subcellular location is the cytoplasm. The protein localises to the membrane. The protein resides in the cell membrane. It carries out the reaction a primary alcohol + NADP(+) = an aldehyde + NADPH + H(+). The catalysed reaction is a secondary alcohol + NADP(+) = a ketone + NADPH + H(+). In terms of biological role, regulatory subunit of the voltage-gated potassium (Kv) channels composed of pore-forming and potassium-conducting alpha subunits and of regulatory beta subunits. The beta-1/KCNAB1 cytoplasmic subunit mediates closure of delayed rectifier potassium channels by physically obstructing the pore via its N-terminal domain and increases the speed of channel closure for other family members. Promotes the inactivation of KCNA1, KCNA2, KCNA4, KCNA5 and KCNA6 alpha subunit-containing channels. Displays nicotinamide adenine dinucleotide phosphate (NADPH)-dependent aldoketoreductase activity by catalyzing the NADPH-dependent reduction of a variety of endogenous aldehydes and ketones. The binding of NADPH is required for efficient down-regulation of potassium channel activity. Oxidation of the bound NADPH restrains N-terminal domain from blocking the channel, thereby decreasing N-type inactivation of potassium channel activity. This is Voltage-gated potassium channel subunit beta-1 (KCNAB1) from Gallus gallus (Chicken).